Consider the following 391-residue polypeptide: Casein kinase II subunit alpha 3 (391 aa).

Residues 39–324 form the Protein kinase domain; it reads YQLVRKLGRG…AREAMEHPYF (286 aa). ATP contacts are provided by residues 45-53 and Lys-68; that span reads LGRGKYSEV. Asp-156 acts as the Proton acceptor in catalysis.

This sequence belongs to the protein kinase superfamily. Ser/Thr protein kinase family. CK2 subfamily. Heterotetramer composed of two catalytic subunits (alpha chain and/or alpha' chain) and two regulatory subunits (beta chains). Interacts with PML. Detected in blood platelets and megakaryocyte cell lines. Poorly expressed in lung. Highly expressed in lung tumor tissues.

The catalysed reaction is L-seryl-[protein] + ATP = O-phospho-L-seryl-[protein] + ADP + H(+). It carries out the reaction L-threonyl-[protein] + ATP = O-phospho-L-threonyl-[protein] + ADP + H(+). In terms of biological role, probable catalytic subunit of a constitutively active serine/threonine-protein kinase complex that phosphorylates a large number of substrates containing acidic residues C-terminal to the phosphorylated serine or threonine. Amplification-dependent oncogene; promotes cell proliferation and tumorigenesis by down-regulating expression of the tumor suppressor protein, PML. May play a role in the pathogenesis of the lung cancer development and progression. This chain is Casein kinase II subunit alpha 3 (CSNK2A3), found in Homo sapiens (Human).